A 124-amino-acid chain; its full sequence is Fluoride-specific ion channel FluC 1 (124 aa).

Helical transmembrane passes span 1–21 (MNWL…YVTD), 30–50 (AVFP…LGLL), 56–76 (AGVA…GALT), and 102–122 (IASV…AQAL). Residues G73 and T76 each coordinate Na(+).

Belongs to the fluoride channel Fluc/FEX (TC 1.A.43) family.

The protein resides in the cell membrane. It carries out the reaction fluoride(in) = fluoride(out). Its activity is regulated as follows. Na(+) is not transported, but it plays an essential structural role and its presence is essential for fluoride channel function. In terms of biological role, fluoride-specific ion channel. Important for reducing fluoride concentration in the cell, thus reducing its toxicity. This Streptomyces avermitilis (strain ATCC 31267 / DSM 46492 / JCM 5070 / NBRC 14893 / NCIMB 12804 / NRRL 8165 / MA-4680) protein is Fluoride-specific ion channel FluC 1.